The following is a 178-amino-acid chain: Putative magnesium-dependent phosphatase YER134C (178 aa).

The Nucleophile role is filled by aspartate 11. Position 11 (aspartate 11) interacts with Mg(2+). 4 residues coordinate phosphate: leucine 12, aspartate 13, serine 74, and arginine 75. Aspartate 13 contributes to the Mg(2+) binding site. Residue aspartate 13 is the Proton donor of the active site. Residue arginine 75 coordinates substrate. Aspartate 141 provides a ligand contact to Mg(2+).

This sequence belongs to the HAD-like hydrolase superfamily.

The protein resides in the cytoplasm. It localises to the nucleus. It catalyses the reaction O-phospho-L-tyrosyl-[protein] + H2O = L-tyrosyl-[protein] + phosphate. In terms of biological role, magnesium-dependent phosphatase which may act as a tyrosine phosphatase. The sequence is that of Putative magnesium-dependent phosphatase YER134C from Saccharomyces cerevisiae (strain ATCC 204508 / S288c) (Baker's yeast).